The chain runs to 119 residues: Ribonuclease P protein component (119 aa).

It belongs to the RnpA family. Consists of a catalytic RNA component (M1 or rnpB) and a protein subunit.

It catalyses the reaction Endonucleolytic cleavage of RNA, removing 5'-extranucleotides from tRNA precursor.. RNaseP catalyzes the removal of the 5'-leader sequence from pre-tRNA to produce the mature 5'-terminus. It can also cleave other RNA substrates such as 4.5S RNA. The protein component plays an auxiliary but essential role in vivo by binding to the 5'-leader sequence and broadening the substrate specificity of the ribozyme. The protein is Ribonuclease P protein component of Streptococcus equi subsp. equi (strain 4047).